A 564-amino-acid chain; its full sequence is Dihydroxy-acid dehydratase (564 aa).

Cysteine 53 is a [2Fe-2S] cluster binding site. Residue aspartate 85 participates in Mg(2+) binding. Position 126 (cysteine 126) interacts with [2Fe-2S] cluster. 2 residues coordinate Mg(2+): aspartate 127 and lysine 128. Lysine 128 is subject to N6-carboxylysine. [2Fe-2S] cluster is bound at residue cysteine 203. Position 454 (glutamate 454) interacts with Mg(2+). The Proton acceptor role is filled by serine 480.

The protein belongs to the IlvD/Edd family. As to quaternary structure, homodimer. The cofactor is [2Fe-2S] cluster. Requires Mg(2+) as cofactor.

It carries out the reaction (2R)-2,3-dihydroxy-3-methylbutanoate = 3-methyl-2-oxobutanoate + H2O. The enzyme catalyses (2R,3R)-2,3-dihydroxy-3-methylpentanoate = (S)-3-methyl-2-oxopentanoate + H2O. It functions in the pathway amino-acid biosynthesis; L-isoleucine biosynthesis; L-isoleucine from 2-oxobutanoate: step 3/4. It participates in amino-acid biosynthesis; L-valine biosynthesis; L-valine from pyruvate: step 3/4. In terms of biological role, functions in the biosynthesis of branched-chain amino acids. Catalyzes the dehydration of (2R,3R)-2,3-dihydroxy-3-methylpentanoate (2,3-dihydroxy-3-methylvalerate) into 2-oxo-3-methylpentanoate (2-oxo-3-methylvalerate) and of (2R)-2,3-dihydroxy-3-methylbutanoate (2,3-dihydroxyisovalerate) into 2-oxo-3-methylbutanoate (2-oxoisovalerate), the penultimate precursor to L-isoleucine and L-valine, respectively. This is Dihydroxy-acid dehydratase from Mycobacterium leprae (strain TN).